The chain runs to 370 residues: Tyrosine-protein kinase transforming protein SEA (370 aa).

In terms of domain architecture, Protein kinase spans 60 to 323 (THRSRVIGRG…GLVCELERVL (264 aa)). Residues 66–74 (IGRGHFGSV) and Lys92 contribute to the ATP site. The active-site Proton acceptor is Asp186. The residue at position 216 (Tyr216) is a Phosphotyrosine; by autocatalysis. The tract at residues 345–370 (PPFPPAPRGQLPDSEDEEDEEEEVAE) is disordered. The span at 357-370 (DSEDEEDEEEEVAE) shows a compositional bias: acidic residues.

Belongs to the protein kinase superfamily. Tyr protein kinase family.

The catalysed reaction is L-tyrosyl-[protein] + ATP = O-phospho-L-tyrosyl-[protein] + ADP + H(+). The chain is Tyrosine-protein kinase transforming protein SEA (V-SEA) from Galliformes.